The primary structure comprises 161 residues: Lipoprotein signal peptidase (161 aa).

A run of 3 helical transmembrane segments spans residues 9-29 (ISLLMTFIVLVFDQVSKWLIT), 63-83 (KMLFFYIITIIILIVLVIFYI), and 88-108 (FNLFMQVAISLLFAGALGNFI). Active-site residues include Asp118 and Asp136. A helical membrane pass occupies residues 131-151 (IFNIADSSLTIGVIFVIITLI).

The protein belongs to the peptidase A8 family.

It localises to the cell membrane. It carries out the reaction Release of signal peptides from bacterial membrane prolipoproteins. Hydrolyzes -Xaa-Yaa-Zaa-|-(S,diacylglyceryl)Cys-, in which Xaa is hydrophobic (preferably Leu), and Yaa (Ala or Ser) and Zaa (Gly or Ala) have small, neutral side chains.. It functions in the pathway protein modification; lipoprotein biosynthesis (signal peptide cleavage). This protein specifically catalyzes the removal of signal peptides from prolipoproteins. The polypeptide is Lipoprotein signal peptidase (Staphylococcus epidermidis (strain ATCC 35984 / DSM 28319 / BCRC 17069 / CCUG 31568 / BM 3577 / RP62A)).